A 187-amino-acid polypeptide reads, in one-letter code: Pyridoxal 5'-phosphate synthase subunit PdxT (187 aa).

47–49 (GES) serves as a coordination point for L-glutamine. The Nucleophile role is filled by Cys76. L-glutamine is bound by residues Arg102 and 128-129 (IR). Residues His165 and Glu167 each act as charge relay system in the active site.

It belongs to the glutaminase PdxT/SNO family. In terms of assembly, in the presence of PdxS, forms a dodecamer of heterodimers. Only shows activity in the heterodimer.

The catalysed reaction is aldehydo-D-ribose 5-phosphate + D-glyceraldehyde 3-phosphate + L-glutamine = pyridoxal 5'-phosphate + L-glutamate + phosphate + 3 H2O + H(+). The enzyme catalyses L-glutamine + H2O = L-glutamate + NH4(+). The protein operates within cofactor biosynthesis; pyridoxal 5'-phosphate biosynthesis. Its function is as follows. Catalyzes the hydrolysis of glutamine to glutamate and ammonia as part of the biosynthesis of pyridoxal 5'-phosphate. The resulting ammonia molecule is channeled to the active site of PdxS. The chain is Pyridoxal 5'-phosphate synthase subunit PdxT from Methanococcus maripaludis (strain C5 / ATCC BAA-1333).